Here is a 378-residue protein sequence, read N- to C-terminus: tRNA (guanine(26)-N(2))-dimethyltransferase (378 aa).

In terms of domain architecture, Trm1 methyltransferase spans 4 to 374 (KEVTEGKVRI…KGYEEIIRCV (371 aa)). Residues arginine 44, arginine 69, aspartate 87, aspartate 114, and alanine 115 each contribute to the S-adenosyl-L-methionine site. Zn(2+) contacts are provided by cysteine 246, cysteine 249, cysteine 263, and cysteine 266.

This sequence belongs to the class I-like SAM-binding methyltransferase superfamily. Trm1 family.

It carries out the reaction guanosine(26) in tRNA + 2 S-adenosyl-L-methionine = N(2)-dimethylguanosine(26) in tRNA + 2 S-adenosyl-L-homocysteine + 2 H(+). Functionally, dimethylates a single guanine residue at position 26 of a number of tRNAs using S-adenosyl-L-methionine as donor of the methyl groups. The polypeptide is tRNA (guanine(26)-N(2))-dimethyltransferase (Saccharolobus islandicus (strain M.14.25 / Kamchatka #1) (Sulfolobus islandicus)).